Here is a 524-residue protein sequence, read N- to C-terminus: Keratin, type II cytoskeletal 71 (524 aa).

The interval 1-130 (MNRQFTCKSG…DPEIQKVRAQ (130 aa)) is head. Positions 131–166 (EREQIKALNNKFASFIDKVRFLEQQNQVLETKWELL) are coil 1A. The IF rod domain maps to 131 to 444 (EREQIKALNN…KLLESEECRM (314 aa)). A linker 1 region spans residues 167–185 (QQLDLNNCKNNLEPILEGY). The coil 1B stretch occupies residues 186-277 (ISNLRKQLET…CLYEAEIAQI (92 aa)). The interval 278–301 (QSHISDMSVILSMDNNRDLNLDSI) is linker 12. Residues 302-440 (IDEVRAQYEE…ATYRKLLESE (139 aa)) form a coil 2 region. A tail region spans residues 441–524 (ECRMSGEFPS…QSASSKKASR (84 aa)). The interval 491–524 (VRGGEGRSRGSTSDYKDTLGKGSSQSASSKKASR) is disordered. Over residues 494–509 (GEGRSRGSTSDYKDTL) the composition is skewed to basic and acidic residues. Low complexity predominate over residues 510–524 (GKGSSQSASSKKASR).

This sequence belongs to the intermediate filament family. As to quaternary structure, heterodimer of a type I and a type II keratin. Associates with KRT16 and/or KRT17.

Its subcellular location is the cytoplasm. It localises to the cytoskeleton. Plays a central role in hair formation. Essential component of keratin intermediate filaments in the inner root sheath (IRS) of the hair follicle. This is Keratin, type II cytoskeletal 71 (KRT71) from Felis catus (Cat).